A 159-amino-acid chain; its full sequence is Cytochrome c-type biogenesis protein CcmE (159 aa).

At 1–8 the chain is on the cytoplasmic side; sequence MNIRRKNR. A helical; Signal-anchor for type II membrane protein membrane pass occupies residues 9 to 29; it reads LWIACAVLAGLALTIGLVLYA. Over 30-159 the chain is Periplasmic; that stretch reads LRSNIDLFYT…PASVYKDPAS (130 aa). 2 residues coordinate heme: His130 and Tyr134. The span at 132-147 shows a compositional bias: basic and acidic residues; it reads ENYTPPEVEKAMEANH. A disordered region spans residues 132-159; sequence ENYTPPEVEKAMEANHRRPASVYKDPAS.

This sequence belongs to the CcmE/CycJ family.

The protein localises to the cell inner membrane. In terms of biological role, heme chaperone required for the biogenesis of c-type cytochromes. Transiently binds heme delivered by CcmC and transfers the heme to apo-cytochromes in a process facilitated by CcmF and CcmH. The protein is Cytochrome c-type biogenesis protein CcmE of Escherichia coli (strain 55989 / EAEC).